The chain runs to 171 residues: Endoribonuclease YbeY (171 aa).

Zn(2+)-binding residues include histidine 126, histidine 130, and histidine 136.

This sequence belongs to the endoribonuclease YbeY family. Zn(2+) serves as cofactor.

Its subcellular location is the cytoplasm. In terms of biological role, single strand-specific metallo-endoribonuclease involved in late-stage 70S ribosome quality control and in maturation of the 3' terminus of the 16S rRNA. The protein is Endoribonuclease YbeY of Rhizobium johnstonii (strain DSM 114642 / LMG 32736 / 3841) (Rhizobium leguminosarum bv. viciae).